A 262-amino-acid chain; its full sequence is Serine O-acetyltransferase (262 aa).

Cysteine 107 (acyl-thioester intermediate) is an active-site residue. Residue lysine 128 coordinates substrate. Histidine 200 (proton acceptor) is an active-site residue. Residue glutamate 202 is part of the active site. A substrate-binding site is contributed by arginine 214.

The protein belongs to the MetA family.

The protein resides in the cytoplasm. It carries out the reaction L-serine + acetyl-CoA = O-acetyl-L-serine + CoA. It catalyses the reaction L-homoserine + acetyl-CoA = O-acetyl-L-homoserine + CoA. The protein operates within amino-acid biosynthesis; L-cysteine biosynthesis; L-cysteine from L-serine: step 1/2. Transfers an acetyl group from acetyl-CoA to L-serine, forming acetyl-L-serine. In vitro, also has homoserine acetyl transferase activity. The sequence is that of Serine O-acetyltransferase from Lactobacillus acidophilus.